A 384-amino-acid chain; its full sequence is 2-deoxy-scyllo-inosose synthase (384 aa).

Residues Asp42, 73–76 (EVHK), 105–109 (GITGN), 129–130 (TT), 140–142 (SLK), and 151–152 (KN) each bind NAD(+). Lys142 is an active-site residue. Glu184 contributes to the Co(2+) binding site. The active site involves Glu244. Co(2+) is bound by residues His247 and His263.

The protein belongs to the sugar phosphate cyclases superfamily. DOI synthase family. The cofactor is NAD(+). It depends on Co(2+) as a cofactor.

It carries out the reaction D-glucose 6-phosphate = 2-deoxy-L-scyllo-inosose + phosphate. The protein operates within metabolic intermediate biosynthesis; 2-deoxystreptamine biosynthesis; 2-deoxystreptamine from D-glucose 6-phosphate: step 1/4. It functions in the pathway antibiotic biosynthesis; lividomycin biosynthesis. Catalyzes the intramolecular carbocycle formation from D-glucose-6-phosphate to 2-deoxy-scyllo-inosose (DOI). The polypeptide is 2-deoxy-scyllo-inosose synthase (livC) (Streptomyces lividus).